Here is a 194-residue protein sequence, read N- to C-terminus: ATP-dependent Clp protease proteolytic subunit 1 (194 aa).

Residue Ser-99 is the Nucleophile of the active site. The active site involves His-124.

Belongs to the peptidase S14 family. Fourteen ClpP subunits assemble into 2 heptameric rings which stack back to back to give a disk-like structure with a central cavity, resembling the structure of eukaryotic proteasomes.

It is found in the cytoplasm. It catalyses the reaction Hydrolysis of proteins to small peptides in the presence of ATP and magnesium. alpha-casein is the usual test substrate. In the absence of ATP, only oligopeptides shorter than five residues are hydrolyzed (such as succinyl-Leu-Tyr-|-NHMec, and Leu-Tyr-Leu-|-Tyr-Trp, in which cleavage of the -Tyr-|-Leu- and -Tyr-|-Trp bonds also occurs).. Its function is as follows. Cleaves peptides in various proteins in a process that requires ATP hydrolysis. Has a chymotrypsin-like activity. Plays a major role in the degradation of misfolded proteins. This Borreliella burgdorferi (strain ATCC 35210 / DSM 4680 / CIP 102532 / B31) (Borrelia burgdorferi) protein is ATP-dependent Clp protease proteolytic subunit 1.